Here is a 206-residue protein sequence, read N- to C-terminus: CASP-like protein 2C1 (206 aa).

The Cytoplasmic portion of the chain corresponds to 1 to 31 (MSVLGVGPRTVTPHLRKGMMESSSGISLARA). Residues 32 to 52 (EAFLRLFAILVLVLTACLLGF) traverse the membrane as a helical segment. Residues 53–71 (DTQTKLLFSTIKKTATFRD) are Extracellular-facing. Residues 72 to 92 (LGALQVVVYVDSVAAGYNLLQ) form a helical membrane-spanning segment. Residues 93–111 (LGRGFISAKLKGKLINVSY) lie on the Cytoplasmic side of the membrane. A helical transmembrane segment spans residues 112 to 132 (VTLPWVCFLLDQAAVYTVFSA). At 133–161 (NTAALQASIIAVTGESSLQWMKVCNRYTR) the chain is on the extracellular side. Residues 162-182 (FCIQVGGALLSGYLASLLMVL) traverse the membrane as a helical segment. The Cytoplasmic portion of the chain corresponds to 183 to 206 (LSSLSAFSLFRLYSPKQFHLLKPT).

The protein belongs to the Casparian strip membrane proteins (CASP) family. Homodimer and heterodimers.

The protein localises to the cell membrane. This Vitis vinifera (Grape) protein is CASP-like protein 2C1.